A 104-amino-acid polypeptide reads, in one-letter code: Increased recombination centers protein 13 (104 aa).

Residues 63–83 (LVHLFSYVFFLFLLKICVDVL) traverse the membrane as a helical segment.

It is found in the membrane. In terms of biological role, may be involved in a pathway contributing to genomic integrity. The chain is Increased recombination centers protein 13 (IRC13) from Saccharomyces cerevisiae (strain ATCC 204508 / S288c) (Baker's yeast).